Reading from the N-terminus, the 275-residue chain is Light-independent protochlorophyllide reductase iron-sulfur ATP-binding protein (275 aa).

ATP is bound by residues 12–17 (GIGKST) and Lys41. Ser16 is a Mg(2+) binding site. [4Fe-4S] cluster contacts are provided by Cys97 and Cys131. ATP is bound at residue 182 to 183 (NR).

This sequence belongs to the NifH/BchL/ChlL family. As to quaternary structure, homodimer. Protochlorophyllide reductase is composed of three subunits; BchL, BchN and BchB. It depends on [4Fe-4S] cluster as a cofactor.

The enzyme catalyses chlorophyllide a + oxidized 2[4Fe-4S]-[ferredoxin] + 2 ADP + 2 phosphate = protochlorophyllide a + reduced 2[4Fe-4S]-[ferredoxin] + 2 ATP + 2 H2O. The protein operates within porphyrin-containing compound metabolism; bacteriochlorophyll biosynthesis (light-independent). In terms of biological role, component of the dark-operative protochlorophyllide reductase (DPOR) that uses Mg-ATP and reduced ferredoxin to reduce ring D of protochlorophyllide (Pchlide) to form chlorophyllide a (Chlide). This reaction is light-independent. The L component serves as a unique electron donor to the NB-component of the complex, and binds Mg-ATP. This Chlorobium phaeobacteroides (strain BS1) protein is Light-independent protochlorophyllide reductase iron-sulfur ATP-binding protein.